The following is a 382-amino-acid chain: Protein phosphatase 1A (382 aa).

A lipid anchor (N-myristoyl glycine) is attached at Gly-2. Residues 23 to 291 form the PPM-type phosphatase domain; the sequence is RYGLSSMQGW…DNMSVILICF (269 aa). Mn(2+)-binding residues include Asp-60, Gly-61, Asp-239, and Asp-282. A phosphoserine mark is found at Ser-375 and Ser-377.

This sequence belongs to the PP2C family. Monomer. Interacts with SMAD2; the interaction dephosphorylates SMAD2 in its C-terminal SXS motif resulting in disruption of the SMAD2/SMAD4 complex, SMAD2 nuclear export and termination of the TGF-beta-mediated signaling. Interacts with SMAD2; the interaction dephosphorylates SMAD2 in its C-terminal SXS motif resulting in disruption of the SMAD2/SMAD4 complex, SMAD2 nuclear export and termination of the TGF-beta-mediated signaling. Interacts with the phosphorylated form of IKBKB/IKKB. Requires Mg(2+) as cofactor. The cofactor is Mn(2+). N-myristoylation is essential for the recognition of its substrates for dephosphorylation.

It localises to the nucleus. Its subcellular location is the cytoplasm. The protein localises to the cytosol. It is found in the membrane. It catalyses the reaction O-phospho-L-seryl-[protein] + H2O = L-seryl-[protein] + phosphate. The catalysed reaction is O-phospho-L-threonyl-[protein] + H2O = L-threonyl-[protein] + phosphate. Functionally, enzyme with a broad specificity. Negatively regulates TGF-beta signaling through dephosphorylating SMAD2 and SMAD3, resulting in their dissociation from SMAD4, nuclear export of the SMADs and termination of the TGF-beta-mediated signaling. Dephosphorylates PRKAA1 and PRKAA2. Plays an important role in the termination of TNF-alpha-mediated NF-kappa-B activation through dephosphorylating and inactivating IKBKB/IKKB. The protein is Protein phosphatase 1A (PPM1A) of Oryctolagus cuniculus (Rabbit).